We begin with the raw amino-acid sequence, 432 residues long: Adenylosuccinate synthetase (432 aa).

GTP contacts are provided by residues 12-18 (GDEGKGK) and 40-42 (GHT). Asp-13 acts as the Proton acceptor in catalysis. The Mg(2+) site is built by Asp-13 and Gly-40. IMP contacts are provided by residues 13–16 (DEGK), 38–41 (NAGH), Thr-128, Arg-142, Gln-223, Thr-238, and Arg-302. Catalysis depends on His-41, which acts as the Proton donor. 298–304 (TTTGRPR) provides a ligand contact to substrate. Residues Arg-304, 330 to 332 (HLD), and 417 to 419 (GVG) each bind GTP.

Belongs to the adenylosuccinate synthetase family. Homodimer. The cofactor is Mg(2+).

It localises to the cytoplasm. It catalyses the reaction IMP + L-aspartate + GTP = N(6)-(1,2-dicarboxyethyl)-AMP + GDP + phosphate + 2 H(+). The protein operates within purine metabolism; AMP biosynthesis via de novo pathway; AMP from IMP: step 1/2. Plays an important role in the de novo pathway of purine nucleotide biosynthesis. Catalyzes the first committed step in the biosynthesis of AMP from IMP. This Symbiobacterium thermophilum (strain DSM 24528 / JCM 14929 / IAM 14863 / T) protein is Adenylosuccinate synthetase.